We begin with the raw amino-acid sequence, 195 residues long: Probable GTP-binding protein EngB (195 aa).

Residues 22-195 (GYPEIALVGR…WKWIEDRMGE (174 aa)) form the EngB-type G domain. Residues 30–37 (GRSNVGKS), 57–61 (GKTQT), 75–78 (DVPG), 142–145 (TKSD), and 173–176 (MFSA) each bind GTP. Mg(2+) is bound by residues serine 37 and threonine 59.

The protein belongs to the TRAFAC class TrmE-Era-EngA-EngB-Septin-like GTPase superfamily. EngB GTPase family. Requires Mg(2+) as cofactor.

Functionally, necessary for normal cell division and for the maintenance of normal septation. The sequence is that of Probable GTP-binding protein EngB from Pediococcus pentosaceus (strain ATCC 25745 / CCUG 21536 / LMG 10740 / 183-1w).